Consider the following 355-residue polypeptide: Sulfate/thiosulfate import ATP-binding protein CysA (355 aa).

In terms of domain architecture, ABC transporter spans 3-233; sequence IIINNVSKQF…PASPFVMGFI (231 aa). 35–42 contributes to the ATP binding site; that stretch reads GPSGSGKS.

Belongs to the ABC transporter superfamily. Sulfate/tungstate importer (TC 3.A.1.6) family. As to quaternary structure, the complex is composed of two ATP-binding proteins (CysA), two transmembrane proteins (CysT and CysW) and a solute-binding protein (CysP).

The protein localises to the cell inner membrane. It catalyses the reaction sulfate(out) + ATP + H2O = sulfate(in) + ADP + phosphate + H(+). It carries out the reaction thiosulfate(out) + ATP + H2O = thiosulfate(in) + ADP + phosphate + H(+). Its function is as follows. Part of the ABC transporter complex CysAWTP involved in sulfate/thiosulfate import. Responsible for energy coupling to the transport system. The polypeptide is Sulfate/thiosulfate import ATP-binding protein CysA (Synechocystis sp. (strain ATCC 27184 / PCC 6803 / Kazusa)).